The sequence spans 266 residues: Orcokinin peptides type B (266 aa).

The N-terminal stretch at 1–20 (MTAQMFTIALLLSLSAIAAA) is a signal peptide. 3 propeptides span residues 21–46 (GTIKTAPARTPSTQDDASFPPDGAPV), 240–246 (DYDVFPD), and 264–266 (NVE).

It belongs to the orcokinin family.

Its subcellular location is the secreted. Functionally, myotropic peptides that enhance both the frequency and amplitude of spontaneous hindgut contractions. The protein is Orcokinin peptides type B of Procambarus clarkii (Red swamp crayfish).